A 254-amino-acid polypeptide reads, in one-letter code: Decaprenylphosphoryl-2-keto-beta-D-erythro-pentose reductase (254 aa).

Aspartate 67 is an NAD(+) binding site. The Proton acceptor role is filled by tyrosine 160. Lysine 164 contributes to the NAD(+) binding site.

The protein belongs to the short-chain dehydrogenases/reductases (SDR) family. In terms of assembly, interacts with DprE1 to form an epimerase complex.

The protein resides in the periplasm. The catalysed reaction is trans,octa-cis-decaprenylphospho-beta-D-arabinofuranose + NAD(+) = trans,octa-cis-decaprenylphospho-beta-D-erythro-pentofuranosid-2-ulose + NADH + H(+). Its pathway is cell wall biogenesis; cell wall polysaccharide biosynthesis. In terms of biological role, component of the DprE1-DprE2 complex that catalyzes the 2-step epimerization of decaprenyl-phospho-ribose (DPR) to decaprenyl-phospho-arabinose (DPA), a key precursor that serves as the arabinose donor required for the synthesis of cell-wall arabinans. DprE1 catalyzes the first step of epimerization, namely FAD-dependent oxidation of the C2' hydroxyl of DPR to yield the keto intermediate decaprenyl-phospho-2'-keto-D-arabinose (DPX). The intermediate DPX is then transferred to DprE2 subunit of the epimerase complex, most probably through a 'substrate channel' at the interface of DprE1-DprE2 complex. DprE2 then catalyzes the second step of epimerization, the NAD(+)-dependent reduction of DPX that leads to the formation of DPA. The chain is Decaprenylphosphoryl-2-keto-beta-D-erythro-pentose reductase from Mycolicibacterium smegmatis (strain ATCC 700084 / mc(2)155) (Mycobacterium smegmatis).